A 1141-amino-acid chain; its full sequence is DNA-directed RNA polymerase subunit beta (1141 aa).

The segment at 1117 to 1141 is disordered; sequence GINISREEPPGQLDDTPDTFSRGGM.

This sequence belongs to the RNA polymerase beta chain family. The RNAP catalytic core consists of 2 alpha, 1 beta, 1 beta' and 1 omega subunit. When a sigma factor is associated with the core the holoenzyme is formed, which can initiate transcription.

The enzyme catalyses RNA(n) + a ribonucleoside 5'-triphosphate = RNA(n+1) + diphosphate. In terms of biological role, DNA-dependent RNA polymerase catalyzes the transcription of DNA into RNA using the four ribonucleoside triphosphates as substrates. The sequence is that of DNA-directed RNA polymerase subunit beta from Rubrobacter xylanophilus (strain DSM 9941 / JCM 11954 / NBRC 16129 / PRD-1).